The primary structure comprises 254 residues: Endolysin B (254 aa).

Catalysis depends on residues Ser82, Asp166, and His240.

Belongs to the L5likevirus endolysin B protein family.

Its function is as follows. Endolysin that degrades the junction between mycolic acid and peptidoglycans in the host cell wall and participates with the holin protein in the sequential events which lead to the programmed host cell lysis releasing the mature viral particles. Once the holin has permeabilized the host cell membrane, the endolysin can reach the periplasm and break down the mycolic acid-rich outer membrane. Cleaves the ester linkage joining the mycolic acid-rich outer membrane to arabinogalactan, releasing free mycolic acids. In Mycobacterium phage D29 (Mycobacteriophage D29), this protein is Endolysin B (12).